Here is a 3010-residue protein sequence, read N- to C-terminus: Genome polyprotein (3010 aa).

Ser2 carries the N-acetylserine; by host modification. Positions 2–23 (STNPKPQRKTKRNTYRRPQDVK) are interaction with STAT1. The tract at residues 2 to 58 (STNPKPQRKTKRNTYRRPQDVKFPGGGQIVGGVYVLPRRGPTLGVRATRKTSERSQP) is interaction with EIF2AK2/PKR. The tract at residues 2 to 59 (STNPKPQRKTKRNTYRRPQDVKFPGGGQIVGGVYVLPRRGPTLGVRATRKTSERSQPR) is interaction with DDX3X. Residues 2 to 75 (STNPKPQRKT…PKARRPEGRA (74 aa)) are disordered. The Cytoplasmic segment spans residues 2-168 (STNPKPQRKT…EDGVNYATGN (167 aa)). 2 short sequence motifs (nuclear localization signal) span residues 5-13 (PKPQRKTKR) and 38-43 (PRRGPT). The span at 7-16 (PQRKTKRNTY) shows a compositional bias: basic residues. Ser53 carries the post-translational modification Phosphoserine; by host. 2 short sequence motifs (nuclear localization signal) span residues 58–64 (PRGRRQP) and 66–71 (PKARRP). The span at 58–68 (PRGRRQPIPKA) shows a compositional bias: basic residues. Residue Ser99 is modified to Phosphoserine; by host. The interval 112–152 (PRRRSRNLGKVIDTLTCGFADLMGYIPLVGAPLGGAARALA) is important for endoplasmic reticulum and mitochondrial localization. Ser116 is modified (phosphoserine; by host PKA). An interaction with APOA2 region spans residues 122-173 (VIDTLTCGFADLMGYIPLVGAPLGGAARALAHGVRVLEDGVNYATGNLPGCS). The important for lipid droplets localization stretch occupies residues 164 to 167 (YATG). Residues 169–189 (LPGCSFSIFLLALLSCLTIPA) form a helical membrane-spanning segment. A propeptide spans 178 to 191 (LLALLSCLTIPASA) (ER anchor for the core protein, removed in mature form by host signal peptidase). Over 190 to 358 (SAYQVRNASG…AGAHWGVLAG (169 aa)) the chain is Lumenal. N-linked (GlcNAc...) asparagine; by host glycosylation is found at Asn196, Asn209, Asn234, and Asn250. Positions 265 to 296 (LVGAAAFCSAMYVGDLCGSVFLVSQLFTFSPR) are important for fusion. Asn305 carries an N-linked (GlcNAc...) asparagine; by host glycan. A helical transmembrane segment spans residues 359–379 (LAYYSMVGNWAKVLIVMLLFA). Residues 380-725 (GVDGVTYTTG…WEYIVLLFLL (346 aa)) lie on the Lumenal side of the membrane. Residues 385–411 (TYTTGGSQARHTQSVTSFFTQGPAQRI) form an HVR1 region. N-linked (GlcNAc...) (high mannose) asparagine; by host glycosylation is found at Asn417, Asn423, Asn430, and Asn448. 4 disulfides stabilise this stretch: Cys429–Cys552, Cys452–Cys459, Cys486–Cys494, and Cys503–Cys508. The HVR2 stretch occupies residues 474–479 (YTEPRD). The tract at residues 480-493 (LDQRPYCWHYAPRQ) is CD81-binding 1. The N-linked (GlcNAc...) (high mannose) asparagine; by host glycan is linked to Asn532. The N-linked (GlcNAc...) asparagine; by host glycan is linked to Asn540. Residues 544-551 (PPQGNWFG) form a CD81-binding 2 region. Residue Asn556 is glycosylated (N-linked (GlcNAc...) (high mannose) asparagine; by host). Cys564 and Cys569 form a disulfide bridge. Residue Asn576 is glycosylated (N-linked (GlcNAc...) (high mannose) asparagine; by host). Intrachain disulfides connect Cys581–Cys585, Cys597–Cys620, and Cys607–Cys644. Asn623 and Asn645 each carry an N-linked (GlcNAc...) (high mannose) asparagine; by host glycan. Cys652 and Cys677 are oxidised to a cystine. The interval 660–671 (SELSPLLLSTTE) is PKR/eIF2-alpha phosphorylation homology domain (PePHD). Residues 726 to 746 (LADARVCACLWMMLLIAQAEA) form a helical membrane-spanning segment. At 747-757 (ALENLVVLNAA) the chain is on the lumenal side. A helical transmembrane segment spans residues 758–778 (SLAGADGILSFLVFFCAAWYI). The Cytoplasmic segment spans residues 779–781 (KGR). Residues 782 to 803 (LVPGAAYALYGVWPLLLLLLAL) traverse the membrane as a helical segment. Residues 804-813 (PPRAYAMDRE) lie on the Lumenal side of the membrane. The chain crosses the membrane as a helical span at residues 814–834 (MAASCGGVVFVGLILLTLSPH). Residues 835 to 838 (YKVF) lie on the Cytoplasmic side of the membrane. A helical transmembrane segment spans residues 839 to 859 (LARLIWWLQYFITRAEAHLCV). Residues 860–881 (WVPPLNVRGGRDAIILLTCAAH) are Lumenal-facing. A helical membrane pass occupies residues 882–902 (PELIFDITKLLLAILGPLMVL). In terms of domain architecture, Peptidase C18 spans 903-1026 (QAAITAMPYF…SIEGQGWRLL (124 aa)). Residues 903–1657 (QAAITAMPYF…CMSADLEVVT (755 aa)) are Cytoplasmic-facing. The tract at residues 904-1206 (AAITAMPYFV…PVESMETTMR (303 aa)) is protease NS2-3. The S-palmitoyl cysteine; by host moiety is linked to residue Cys922. Positions 929–949 (AGGHYVQMAFMKLAALTGTYV) are interaction with host SCPS1. Catalysis depends on for protease NS2 activity; shared with dimeric partner residues His952, Glu972, and Cys993. Residues 1027-1208 (APITAYAQQT…ESMETTMRSP (182 aa)) enclose the Peptidase S29 domain. Active-site charge relay system; for serine protease NS3 activity residues include His1083 and Asp1107. The Zn(2+) site is built by Cys1123 and Cys1125. The Charge relay system; for serine protease NS3 activity role is filled by Ser1165. Residues Cys1171 and His1175 each coordinate Zn(2+). Residues 1217 to 1369 (PAVPQTFQVA…PNIEEVALSN (153 aa)) form the Helicase ATP-binding domain. 1230-1237 (APTGSGKS) contacts ATP. Residues Ser1237 and Glu1317 each coordinate Mg(2+). The DECH box signature appears at 1316 to 1319 (DECH). Residues 1486–1497 (QRRGRTGRGRGG) form an RNA-binding region. A helical membrane pass occupies residues 1658–1678 (STWVLVGGVLAALAAYCLTTG). Positions 1679-1690 (SVVIVGRIILSG) are NS3-binding. Residues 1679–1805 (SVVIVGRIIL…SITSPLTTQN (127 aa)) are Cytoplasmic-facing. The chain crosses the membrane as a helical span at residues 1806-1824 (TLLFNILGGWVAAQLAPPS). Residues 1825–1828 (AASA) lie on the Lumenal side of the membrane. The chain crosses the membrane as a helical span at residues 1829 to 1849 (FVGAGIAGAAIGSIGLGKVLV). Residue Asp1850 is a topological domain, cytoplasmic. Residues 1851–1871 (ILAGYGAGVAGALVAFKVMSG) form a helical membrane-spanning segment. The Lumenal segment spans residues 1872–1881 (EAPSAEDLVN). A helical membrane pass occupies residues 1882-1902 (LLPAILSPGALVVGVVCAAIL). Residues 1903–1972 (RRHVGPGEGA…WINEDCSTPC (70 aa)) lie on the Cytoplasmic side of the membrane. S-palmitoyl cysteine; by host attachment occurs at residues Cys1968 and Cys1972. Residues 1973–2002 (SGSWLKDVWDWICTVLTDFKTWLQSKLLPK) lie within the membrane without spanning it. Residues 2003 to 2989 (LPGVPFFSCQ…YHSLSRARPR (987 aa)) lie on the Cytoplasmic side of the membrane. Positions 2011, 2029, 2031, and 2052 each coordinate Zn(2+). Positions 2120–2208 (EFFTELDGVR…ASSSASQLSA (89 aa)) are FKBP8-binding. The transcriptional activation stretch occupies residues 2120 to 2332 (EFFTELDGVR…PIPPPRKKRT (213 aa)). Residues 2135–2139 (PACRP) are interaction with non-structural protein 4A. The segment at 2187–2220 (KRRLARGSPPSLASSSASQLSAPSLKATCTTHHD) is disordered. Residues 2189 to 2441 (RLARGSPPSL…PCAAEESKLP (253 aa)) form an interaction with host SKP2 region. Position 2194 is a phosphoserine; by host; in p56 (Ser2194). Residues 2194-2211 (SPPSLASSSASQLSAPSL) are compositionally biased toward low complexity. 5 positions are modified to phosphoserine; by host; in p58: Ser2197, Ser2201, Ser2204, Ser2207, and Ser2210. The tract at residues 2210 to 2249 (SLKATCTTHHDSPDADLIEANLLWRQEMGGNITRVESENK) is ISDR. An interaction with EIF2AK2/PKR region spans residues 2210-2275 (SLKATCTTHH…REVSVAAEIL (66 aa)). Residues 2249–2306 (KVVILDSFDPLRAEEDEREVSVAAEILRKSKKFPPALPIWARPDYNPPLLESWKSPDY) form an NS4B-binding region. The SH3-binding motif lies at 2322–2325 (PPIP). Positions 2326–2334 (PPRKKRTVV) match the Nuclear localization signal motif. Lys2350 participates in a covalent cross-link: Glycyl lysine isopeptide (Lys-Gly) (interchain with G-Cter in ubiquitin). Residues 2351–2371 (TFGSSGSSAVDSGTATAPPDQ) show a composition bias toward polar residues. Residues 2351 to 2408 (TFGSSGSSAVDSGTATAPPDQTSDDGDKESDVESYSSMPPLEGEPGDPDLSDGSWSTV) are disordered. The segment at 2354 to 2377 (SSGSSAVDSGTATAPPDQTSDDGD) is V3. A compositionally biased stretch (acidic residues) spans 2372-2382 (TSDDGDKESDV). 2 positions are modified to phosphoserine; by host: Ser2448 and Ser2461. The 119-residue stretch at 2633–2751 (PMGFSYDTRC…ICESAGTQED (119 aa)) folds into the RdRp catalytic domain. The Mg(2+) site is built by Asp2639, Asp2737, and Asp2738. Residues 2990-3010 (WFMWCLLLLSVGVGIYLLPNR) traverse the membrane as a helical segment.

The protein belongs to the hepacivirus polyprotein family. As to quaternary structure, homooligomer. Interacts with E1 (via C-terminus). Interacts with the non-structural protein 5A. Interacts (via N-terminus) with host STAT1 (via SH2 domain); this interaction results in decreased STAT1 phosphorylation and ubiquitin-mediated proteasome-dependent STAT1 degradation, leading to decreased IFN-stimulated gene transcription. Interacts with host STAT3; this interaction constitutively activates STAT3. Interacts with host LTBR receptor. Interacts with host TNFRSF1A receptor and possibly induces apoptosis. Interacts with host HNRPK. Interacts with host YWHAE. Interacts with host UBE3A/E6AP. Interacts with host DDX3X. Interacts with host APOA2. Interacts with host RXRA protein. Interacts with host SP110 isoform 3/Sp110b; this interaction sequesters the transcriptional corepressor SP110 away from the nucleus. Interacts with host CREB3 nuclear transcription protein; this interaction triggers cell transformation. Interacts with host ACY3. Interacts with host C1QR1. Interacts with host RBM24; this interaction, which enhances the interaction of the mature core protein with 5'-UTR, may inhibit viral translation and favor replication. Interacts with host EIF2AK2/PKR; this interaction induces the autophosphorylation of EIF2AK2. Part of the viral assembly initiation complex composed of NS2, E1, E2, NS3, NS4A, NS5A and the mature core protein. Forms a heterodimer with envelope glycoprotein E2. Interacts with mature core protein. Interacts with protease NS2. The heterodimer E1/E2 interacts with host CLDN1; this interaction plays a role in viral entry into host cell. Interacts with host SPSB2 (via C-terminus). Part of the viral assembly initiation complex composed of NS2, E1, E2, NS3, NS4A, NS5A and the mature core protein. Interacts with host NEURL3; this interaction prevents E1 binding to glycoprotein E2. In terms of assembly, forms a heterodimer with envelope glycoprotein E1. Interacts with host CD81 and SCARB1 receptors; these interactions play a role in viral entry into host cell. Interacts with host EIF2AK2/PKR; this interaction inhibits EIF2AK2 and probably allows the virus to evade the innate immune response. Interacts with host CD209/DC-SIGN and CLEC4M/DC-SIGNR. Interact with host SPCS1; this interaction is essential for viral particle assembly. Interacts with protease NS2. The heterodimer E1/E2 interacts with host CLDN1; this interaction plays a role in viral entry into host cell. Part of the viral assembly initiation complex composed of NS2, E1, E2, NS3, NS4A, NS5A and the mature core protein. Interacts with host SLC3A2/4F2hc; the interaction may facilitate viral entry into host cell. Interacts with human PLSCR1. As to quaternary structure, homohexamer. Homoheptamer. Interacts with protease NS2. Homodimer. Interacts with host SPCS1; this interaction is essential for viral particle assembly. Interacts with envelope glycoprotein E1. Interacts with envelope glycoprotein E2. Interacts with viroporin p7. Interacts with serine protease/helicase NS3. Part of the replication complex composed of NS2, NS3, NS4A, NS4B, NS5A and the RNA-directed RNA polymerase embedded in an ER-derived membranous web. Part of the viral assembly initiation complex composed of NS2, E1, E2, NS3, NS4A, NS5A and the mature core protein. In terms of assembly, interacts with protease NS2. Interacts with non-structural protein 4A; this interaction stabilizes the folding of NS3 serine protease. NS3-NS4A interaction is essential for NS3 activation and allows membrane anchorage of the latter. NS3/NS4A complex also prevents phosphorylation of host IRF3, thus preventing the establishment of dsRNA induced antiviral state. Interacts with host MAVS; this interaction leads to the cleavage and inhibition of host MAVS. Interacts with host TICAM1; this interaction leads to the cleavage and inhibition of host TICAM1. Interacts with host TANK-binding kinase/TBK1; this interaction results in the inhibition of the association between TBK1 and IRF3, which leads to the inhibition of IRF3 activation. Interacts with host RBM24. Part of the replication complex composed of NS2, NS3, NS4A, NS4B, NS5A and the RNA-directed RNA polymerase embedded in an ER-derived membranous web. Part of the viral assembly initiation complex composed of NS2, E1, E2, NS3, NS4A, NS5A and the mature core protein. As to quaternary structure, interacts with NS3 serine protease; this interaction stabilizes the folding of NS3 serine protease. NS3-NS4A interaction is essential for NS3 activation and allows membrane anchorage of the latter. Interacts with non-structural protein 5A (via N-terminus). Part of the replication complex composed of NS2, NS3, NS4A, NS4B, NS5A and the RNA-directed RNA polymerase embedded in an ER-derived membranous web. Part of the viral assembly initiation complex composed of NS2, E1, E2, NS3, NS4A, NS5A and the mature core protein. Homomultimer. Interacts with non-structural protein NS5A. Interacts with host PLA2G4C; this interaction likely initiates the recruitment of replication complexes to lipid droplets. Interacts with host STING; this interaction disrupts the interaction between STING and TBK1 thereby suppressing the interferon signaling. Part of the replication complex composed of NS2, NS3, NS4A, NS4B, NS5A and the RNA-directed RNA polymerase embedded in an ER-derived membranous web. In terms of assembly, monomer. Homodimer; dimerization is required for RNA-binding. Interacts with the mature core protein. Interacts (via N-terminus) with non-structural protein 4A. Interacts with non-structural protein 4B. Interacts (via region D2) with RNA-directed RNA polymerase. Part of the viral assembly initiation complex composed of NS2, E1, E2, NS3, NS4A, NS5A and the mature core protein. Part of the replication complex composed of NS2, NS3, NS4A, NS4B, NS5A and the RNA-directed RNA polymerase embedded in an ER-derived membranous web. Interacts with host GRB2. Interacts with host BIN1. Interacts with host PIK3R1. Interacts with host SRCAP. Interacts with host FKBP8. Interacts (via C-terminus) with host VAPB (via MSP domain). Interacts with host EIF2AK2/PKR; this interaction leads to disruption of EIF2AK2 dimerization by NS5A and probably allows the virus to evade the innate immune response. Interacts (via N-terminus) with host PACSIN2 (via N-terminus); this interaction attenuates protein kinase C alpha-mediated phosphorylation of PACSIN2 by disrupting the interaction between PACSIN2 and PRKCA. Interacts (via N-terminus) with host SRC kinase (via SH2 domain). Interacts with most Src-family kinases. Interacts with host IFI27 and SKP2; promotes the ubiquitin-mediated proteasomal degradation of NS5A. Interacts with host GPS2. Interacts with host TNFRSF21; this interaction allows the modulation by the virus of JNK, p38 MAPK, STAT3, and Akt signaling pathways in a DR6-dependent manner. Interacts (via N-terminus) with host CIDEB (via N-terminus); this interaction seems to regulate the association of HCV particles with APOE. Interacts with host CHKA/Choline Kinase-alpha; CHKA bridges host PI4KA and NS5A and potentiates NS5A-stimulated PI4KA activity, which then facilitates the targeting of the ternary complex to the ER for viral replication. Interacts with host SPSB2 (via C-terminus); this interaction targets NS5A for ubiquitination and degradation. Interacts with host RAB18; this interaction may promote the association of NS5A and other replicase components with lipid droplets. Interacts (via region D2) with host PPIA/CYPA; the interaction stimulates RNA-binding ability of NS5A and is dependent on the peptidyl-prolyl cis-trans isomerase activity of PPIA/CYPA. Interacts with host TRIM14; this interaction induces the degradation of NS5A. As to quaternary structure, homooligomer. Interacts with non-structural protein 5A. Interacts with host VAPB. Interacts with host PRK2/PKN2. Interacts with host HNRNPA1 and SEPT6; these interactions facilitate viral replication. Part of the replication complex composed of NS2, NS3, NS4A, NS4B, NS5A and the RNA-directed RNA polymerase. Zn(2+) is required as a cofactor. The cofactor is Mg(2+). Post-translationally, specific enzymatic cleavages in vivo yield mature proteins. The structural proteins, core, E1, E2 and p7 are produced by proteolytic processing by host signal peptidases. The core protein precursor is synthesized as a 23 kDa, which is retained in the ER membrane through the hydrophobic signal peptide. Cleavage by the signal peptidase releases the 21 kDa mature core protein. The cleavage of the core protein precursor occurs between aminoacids 176 and 188 but the exact cleavage site is not known. Some degraded forms of the core protein appear as well during the course of infection. The other proteins (p7, NS2, NS3, NS4A, NS4B, NS5A and NS5B) are cleaved by the viral proteases. Autoprocessing between NS2 and NS3 is mediated by the NS2 cysteine protease catalytic domain and regulated by the NS3 N-terminal domain. In terms of processing, phosphorylated by host PKC and PKA. Ubiquitinated; mediated by UBE3A and leading to core protein subsequent proteasomal degradation. Post-translationally, highly N-glycosylated. In terms of processing, palmitoylation is required for NS2/3 autoprocessing and E2 recruitment to membranes. Palmitoylated. This modification may play a role in its polymerization or in protein-protein interactions. Post-translationally, phosphorylated on serines in a basal form termed p56. p58 is a hyperphosphorylated form of p56. p56 and p58 coexist in the cell in roughly equivalent amounts. Hyperphosphorylation is dependent on the presence of NS4A. Host CSNK1A1/CKI-alpha or RPS6KB1 kinases may be responsible for NS5A phosphorylation. In terms of processing, tyrosine phosphorylation is essential for the interaction with host SRC. Ubiquitinated. Ubiquitination, most probably at Lys-2350, mediated by host IFI27 and SKP2 leads to proteasomal degradation, restricting viral infection. Ubiquitination by host TRIM22 leads to interruption of viral replication. Post-translationally, the N-terminus is phosphorylated by host PRK2/PKN2.

Its subcellular location is the host endoplasmic reticulum membrane. The protein localises to the host mitochondrion membrane. The protein resides in the virion. It localises to the host cytoplasm. It is found in the host nucleus. Its subcellular location is the host lipid droplet. The protein localises to the virion membrane. The protein resides in the host mitochondrion. It localises to the host cell membrane. It is found in the host perinuclear region. The enzyme catalyses Hydrolysis of four peptide bonds in the viral precursor polyprotein, commonly with Asp or Glu in the P6 position, Cys or Thr in P1 and Ser or Ala in P1'.. It carries out the reaction a ribonucleoside 5'-triphosphate + H2O = a ribonucleoside 5'-diphosphate + phosphate + H(+). The catalysed reaction is ATP + H2O = ADP + phosphate + H(+). It catalyses the reaction RNA(n) + a ribonucleoside 5'-triphosphate = RNA(n+1) + diphosphate. With respect to regulation, inhibited by the antiviral drug hexamethylene amiloride. Inhibition by amantadine appears to be genotype-dependent. Also inhibited by long-alkyl-chain iminosugar derivatives. Activity is up-regulated by PRK2/PKN2-mediated phosphorylation. Its function is as follows. Packages viral RNA to form a viral nucleocapsid, and promotes virion budding. Participates in the viral particle production as a result of its interaction with the non-structural protein 5A. Binds RNA and may function as a RNA chaperone to induce the RNA structural rearrangements taking place during virus replication. Modulates viral translation initiation by interacting with viral IRES and 40S ribosomal subunit. Affects various cell signaling pathways, host immunity and lipid metabolism. Prevents the establishment of cellular antiviral state by blocking the interferon-alpha/beta (IFN-alpha/beta) and IFN-gamma signaling pathways and by blocking the formation of phosphorylated STAT1 and promoting ubiquitin-mediated proteasome-dependent degradation of STAT1. Activates STAT3 leading to cellular transformation. Regulates the activity of cellular genes, including c-myc and c-fos. May repress the promoter of p53, and sequester CREB3 and SP110 isoform 3/Sp110b in the cytoplasm. Represses cell cycle negative regulating factor CDKN1A, thereby interrupting an important check point of normal cell cycle regulation. Targets transcription factors involved in the regulation of inflammatory responses and in the immune response: suppresses TNF-induced NF-kappa-B activation, and activates AP-1. Binds to dendritic cells (DCs) via C1QR1, resulting in down-regulation of T-lymphocytes proliferation. Alters lipid metabolism by interacting with hepatocellular proteins involved in lipid accumulation and storage. Induces up-regulation of FAS promoter activity, and thereby contributes to the increased triglyceride accumulation in hepatocytes (steatosis). In terms of biological role, forms a heterodimer with envelope glycoprotein E2, which mediates virus attachment to the host cell, virion internalization through clathrin-dependent endocytosis and fusion with host membrane. Fusion with the host cell is most likely mediated by both E1 and E2, through conformational rearrangements of the heterodimer required for fusion rather than a classical class II fusion mechanism. E1/E2 heterodimer binds host apolipoproteins such as APOB and ApoE thereby forming a lipo-viro-particle (LVP). APOE associated to the LVP allows the initial virus attachment to cell surface receptors such as the heparan sulfate proteoglycans (HSPGs), syndecan-1 (SDC1), syndecan-1 (SDC2), the low-density lipoprotein receptor (LDLR) and scavenger receptor class B type I (SCARB1). The cholesterol transfer activity of SCARB1 allows E2 exposure and binding of E2 to SCARB1 and the tetraspanin CD81. E1/E2 heterodimer binding on CD81 activates the epithelial growth factor receptor (EGFR) signaling pathway. Diffusion of the complex E1-E2-EGFR-SCARB1-CD81 to the cell lateral membrane allows further interaction with Claudin 1 (CLDN1) and occludin (OCLN) to finally trigger HCV entry. Forms a heterodimer with envelope glycoprotein E1, which mediates virus attachment to the host cell, virion internalization through clathrin-dependent endocytosis and fusion with host membrane. Fusion with the host cell is most likely mediated by both E1 and E2, through conformational rearrangements of the heterodimer required for fusion rather than a classical class II fusion mechanism. The interaction between envelope glycoprotein E2 and host apolipoprotein E/APOE allows the proper assembly, maturation and infectivity of the viral particles. This interaction is probably promoted via the up-regulation of cellular autophagy by the virus. E1/E2 heterodimer binds host apolipoproteins such as APOB and APOE thereby forming a lipo-viro-particle (LVP). APOE associated to the LVP allows the initial virus attachment to cell surface receptors such as the heparan sulfate proteoglycans (HSPGs), syndecan-1 (SDC1), syndecan-1 (SDC2), the low-density lipoprotein receptor (LDLR) and scavenger receptor class B type I (SCARB1). The cholesterol transfer activity of SCARB1 allows E2 exposure and binding of E2 to SCARB1 and the tetraspanin CD81. E1/E2 heterodimer binding on CD81 activates the epithelial growth factor receptor (EGFR) signaling pathway. Diffusion of the complex E1-E2-EGFR-SCARB1-CD81 to the cell lateral membrane allows further interaction with Claudin 1 (CLDN1) and occludin (OCLN) to finally trigger HCV entry. Inhibits host EIF2AK2/PKR activation, preventing the establishment of an antiviral state. Viral ligand for CD209/DC-SIGN and CLEC4M/DC-SIGNR, which are respectively found on dendritic cells (DCs), and on liver sinusoidal endothelial cells and macrophage-like cells of lymph node sinuses. These interactions allow the capture of circulating HCV particles by these cells and subsequent facilitated transmission to permissive cells such as hepatocytes and lymphocyte subpopulations. The interaction between E2 and host amino acid transporter complex formed by SLC3A2 and SLC7A5/LAT1 may facilitate viral entry into host cell. Functionally, ion channel protein that acts as a viroporin and plays an essential role in the assembly, envelopment and secretion of viral particles. Regulates the host cell secretory pathway, which induces the intracellular retention of viral glycoproteins and favors assembly of viral particles. Creates a pore in acidic organelles and releases Ca(2+) and H(+) in the cytoplasm of infected cells, leading to a productive viral infection. High levels of cytoplasmic Ca(2+) may trigger membrane trafficking and transport of viral ER-associated proteins to viroplasms, sites of viral genome replication. This ionic imbalance induces the assembly of the inflammasome complex, which triggers the maturation of pro-IL-1beta into IL-1beta through the action of caspase-1. Targets also host mitochondria and induces mitochondrial depolarization. In addition of its role as a viroporin, acts as a lipid raft adhesion factor. Its function is as follows. Cysteine protease required for the proteolytic auto-cleavage between the non-structural proteins NS2 and NS3. The N-terminus of NS3 is required for the function of NS2 protease (active region NS2-3). Promotes the initiation of viral particle assembly by mediating the interaction between structural and non-structural proteins. In terms of biological role, displays three enzymatic activities: serine protease with a chymotrypsin-like fold, NTPase and RNA helicase. NS3 serine protease, in association with NS4A, is responsible for the cleavages of NS3-NS4A, NS4A-NS4B, NS4B-NS5A and NS5A-NS5B. The NS3/NS4A complex prevents phosphorylation of host IRF3, thus preventing the establishment of dsRNA induced antiviral state. The NS3/NS4A complex induces host amino acid transporter component SLC3A2, thus contributing to HCV propagation. NS3 RNA helicase binds to RNA and unwinds both dsDNA and dsRNA in the 3' to 5' direction, and likely resolves RNA complicated stable secondary structures in the template strand. Binds a single ATP and catalyzes the unzipping of a single base pair of dsRNA. Inhibits host antiviral proteins TBK1 and IRF3 thereby preventing the establishment of an antiviral state. Cleaves host MAVS/CARDIF thereby preventing the establishment of an antiviral state. Cleaves host TICAM1/TRIF, thereby disrupting TLR3 signaling and preventing the establishment of an antiviral state. Induces a specific membrane alteration that serves as a scaffold for the virus replication complex. This membrane alteration gives rise to the so-called ER-derived membranous web that contains the replication complex. NS4B self-interaction contributes to its function in membranous web formation. Promotes host TRIF protein degradation in a CASP8-dependent manner thereby inhibiting host TLR3-mediated interferon signaling. Disrupts the interaction between STING and TBK1 contributing to the inhibition of interferon signaling. Functionally, phosphorylated protein that is indispensable for viral replication and assembly. Both hypo- and hyperphosphorylated states are required for the viral life cycle. The hyperphosphorylated form of NS5A is an inhibitor of viral replication. Involved in RNA-binding and especially in binding to the viral genome. Zinc is essential for RNA-binding. Participates in the viral particle production as a result of its interaction with the mature viral core protein. Its interaction with host VAPB may target the viral replication complex to vesicles. Down-regulates viral IRES translation initiation. Mediates interferon resistance, presumably by interacting with and inhibiting host EIF2AK2/PKR. Prevents BIN1-induced apoptosis. Acts as a transcriptional activator of some host genes important for viral replication when localized in the nucleus. Via the interaction with host PACSIN2, modulates lipid droplet formation in order to promote virion assembly. Modulates TNFRSF21/DR6 signaling pathway for viral propagation. Its function is as follows. RNA-dependent RNA polymerase that performs primer-template recognition and RNA synthesis during viral replication. Initiates RNA transcription/replication at a flavin adenine dinucleotide (FAD), resulting in a 5'- FAD cap on viral RNAs. In this way, recognition of viral 5' RNA by host pattern recognition receptors can be bypassed, thereby evading activation of antiviral pathways. In terms of biological role, peptide cofactor which forms a non-covalent complex with the N-terminal of NS3 serine protease. The NS3/NS4A complex prevents phosphorylation of host IRF3, thus preventing the establishment of dsRNA induced antiviral state. The NS3/NS4A complex induces host amino acid transporter component SLC3A2, thus contributing to HCV propagation. The polypeptide is Genome polyprotein (Homo sapiens (Human)).